Consider the following 396-residue polypeptide: Pre-mycofactocin synthase (396 aa).

In terms of domain architecture, FMN hydroxy acid dehydrogenase spans 1 to 383 (MAEAWFETVA…SPADILVPTG (383 aa)). 4 residues coordinate FMN: S108, Q128, T156, and K254. H278 (proton acceptor) is an active-site residue. FMN-binding positions include 309–313 (DGGIR) and 332–333 (GR).

This sequence belongs to the FMN-dependent alpha-hydroxy acid dehydrogenase family. FMN is required as a cofactor.

It catalyses the reaction 3-amino-5-[(4-hydroxyphenyl)methyl]-4,4-dimethyl-2-pyrrolidin-2-one + O2 + H2O = pre-mycofactocin + H2O2 + NH4(+). Its function is as follows. Involved in the biosynthesis of the enzyme cofactor mycofactocin (MFT). Catalyzes the oxidative deamination of AHDP (3-amino-5-[(4-hydroxyphenyl)methyl]-4,4-dimethyl-2-pyrrolidin-2-one), forming an alpha-keto amide moiety on the resulting molecule, which is called pre-mycofactocin (PMFT). This reaction occurs via a 5-[(4-hydroxyphenyl)methyl]-3-imino-4,4-dimethylpyrrolidin-2-one intermediate, which converts to PMFT. The alpha-keto amide moiety is the redox-active center for the redox activity of mycofactocin. This chain is Pre-mycofactocin synthase (mftD), found in Mycobacterium tuberculosis (strain CDC 1551 / Oshkosh).